Consider the following 4678-residue polypeptide: E3 ubiquitin-protein ligase MYCBP2 (4678 aa).

3 disordered regions span residues 87–127, 172–192, and 609–628; these read DRDQ…RSKS, SKNS…SKEP, and ASKG…KPYK. Basic residues predominate over residues 100–124; that stretch reads SRNKKILNKKKLKRKQKSKSKVKTR. Phosphoserine occurs at positions 127, 178, 181, and 183. RCC1 repeat units follow at residues 600–655, 699–755, 907–957, 958–1008, and 1010–1066; these read DGSI…VISK, NGEV…MMCP, KRDK…VLME, NGDV…VLLM, and GQVF…LRID. Basic residues predominate over residues 898 to 910; that stretch reads RSHPAQLKHKRDK. Residues 898-928 are disordered; it reads RSHPAQLKHKRDKHKDGSGERGEKDASKITT. Residues 911–924 are compositionally biased toward basic and acidic residues; it reads HKDGSGERGEKDAS. Residues 1235–1386 form a PHR domain 1 region; the sequence is NRFESHGGGW…GQIPQLLYRL (152 aa). Phosphoserine is present on Ser1624. The tract at residues 1726-1884 is PHR domain 2; sequence NRFTKTSQGR…GQIPQILYYR (159 aa). A disulfide bond links Cys1748 and Cys1863. Disordered stretches follow at residues 1993-2012 and 2321-2340; these read FNPN…QGLS and QQDQ…VTAA. Residues 1994 to 2012 are compositionally biased toward polar residues; it reads NPNQSTDSTTGNQPEQGLS. The RAE1 binding stretch occupies residues 2022–2550; the sequence is VIESEHPYKP…NQHLGKSLLV (529 aa). The Filamin repeat unit spans residues 2341–2443; the sequence is SSNTDMTYGG…IDAGLEVKVK (103 aa). Thr2683 is modified (phosphothreonine). Disordered regions lie at residues 2709 to 2931, 2943 to 2963, 2979 to 3020, and 3066 to 3085; these read LGNS…LHSE, TNSL…VDEG, EQEM…EPAK, and APIR…ETKL. The span at 2718–2733 shows a compositional bias: polar residues; it reads NISTSSKPASTSGKSE. Positions 2742–2760 are enriched in basic and acidic residues; it reads LKPDGRMSRTTADQKKPRG. Residue Ser2769 is modified to Phosphoserine. The segment covering 2775–2785 has biased composition (basic and acidic residues); the sequence is DAAKLRSDSHS. The segment covering 2786-2810 has biased composition (polar residues); that stretch reads RSLSPNHNTLQTLKSDGRMPSSSRA. Residues Ser2787, Ser2789, Ser2833, Ser2839, Ser2869, Ser2871, and Ser2920 each carry the phosphoserine modification. Residues 2828–2843 show a composition bias toward low complexity; that stretch reads PANRSSPSGASSPRSS. Positions 2860–2871 are enriched in basic and acidic residues; sequence TKLDPPRERSKS. Ser2985 is subject to Phosphoserine. The segment covering 2988-3001 has biased composition (basic residues); that stretch reads ISRKCANRHTRPKK. Phosphoserine is present on residues Ser3090, Ser3478, and Ser3505. Residues 3605 to 3631 are disordered; it reads PVEPEEEEDEENKTSKENSEQEKDTRV. Residues 3616–3631 show a composition bias toward basic and acidic residues; sequence NKTSKENSEQEKDTRV. The region spanning 3719–3897 is the DOC domain; it reads SISIQSGFEA…VAQQRNCEAE (179 aa). The disordered stretch occupies residues 3915–3934; the sequence is SGDAEPTPEQEEKALLSSPE. Position 3921 is a phosphothreonine (Thr3921). 2 positions are modified to phosphoserine: Ser3931 and Ser3932. Zn(2+) is bound by residues Cys4428, Cys4431, Cys4446, His4448, His4451, Cys4454, Cys4475, Cys4478, Cys4544, and Cys4547. Residues 4428 to 4479 form an RING-type; atypical zinc finger; that stretch reads CMICFTEALSAAPAIQLDCSHIFHLQCCRRVLENRWLGPRITFGFISCPICK. The tandem cysteine domain stretch occupies residues 4539 to 4676; it reads YAYYVCYKCR…LGCGVCRNAH (138 aa). Cys4558 is an active-site residue. Zn(2+) is bound by residues Cys4575, Cys4578, Cys4587, His4590, Cys4599, Cys4602, and Cys4603. Cys4610 is an active-site residue. The Zn(2+) site is built by Cys4617, Cys4620, Cys4638, Cys4652, His4658, Cys4669, and Cys4672.

Belongs to the RING-Cys relay (RCR) family. In terms of assembly, interacts with MYC. Interacts with TSC2 (tuberin) when TSC2 is in complex with TSC1 (hamartin). Interacts with FBXO45. Interacts with RAE1. Interacts with CPNE1 (via VWFA domain) and CPNE4 (via VWFA domain). Interacts with (sumoylated) RANGAP1; interaction with sumoylated RANGAP1 inhibits E3 ubiquitin-protein ligase activity and promotes MYCBP2 translocation to the nucleus. Interacts with RAN. Interacts with ATP13A2; the interaction inhibits the ubiquitination of TSC2 by MYCBP2. Interacts with USP11. Autoubiquitinated. In terms of tissue distribution, expressed in all tissues examined, expression is exceptionally abundant in brain and thymus. Colocalizes with TSC1 and TSC2 along the neurites and in the growth cones. Highly expressed in peripheral and central neurons. Colocalized with TSC1 in one of the filopodial extensions at the tip of a growth cone.

Its subcellular location is the nucleus. The protein localises to the cell projection. It localises to the axon. The protein resides in the cytoplasm. It is found in the cytoskeleton. The catalysed reaction is [E2 ubiquitin-conjugating enzyme]-S-ubiquitinyl-L-cysteine + [acceptor protein]-L-threonine = [E2 ubiquitin-conjugating enzyme]-L-cysteine + [acceptor protein]-3-O-ubiquitinyl-L-threonine.. Its pathway is protein modification; protein ubiquitination. In terms of biological role, atypical E3 ubiquitin-protein ligase which specifically mediates ubiquitination of threonine and serine residues on target proteins, instead of ubiquitinating lysine residues. Shows esterification activity towards both threonine and serine, with a preference for threonine, and acts via two essential catalytic cysteine residues that relay ubiquitin to its substrate via thioester intermediates. Interacts with the E2 enzymes UBE2D1, UBE2D3, UBE2E1 and UBE2L3. Plays a key role in neural development, probably by mediating ubiquitination of threonine residues on target proteins. Involved in different processes such as regulation of neurite outgrowth, synaptic growth, synaptogenesis and axon degeneration. Required for the formation of major central nervous system axon tracts. Required for proper axon growth by regulating axon navigation and axon branching: acts by regulating the subcellular location and stability of MAP3K12/DLK. Required for proper localization of retinogeniculate projections but not for eye-specific segregation. Regulates axon guidance in the olfactory system. Involved in Wallerian axon degeneration, an evolutionarily conserved process that drives the loss of damaged axons: acts by promoting destabilization of NMNAT2, probably via ubiquitination of NMNAT2. Catalyzes ubiquitination of threonine and/or serine residues on NMNAT2, consequences of threonine and/or serine ubiquitination are however unknown. Regulates the internalization of TRPV1 in peripheral sensory neurons. Mediates ubiquitination and subsequent proteasomal degradation of TSC2/tuberin. Independently of the E3 ubiquitin-protein ligase activity, also acts as a guanosine exchange factor (GEF) for RAN in neurons of dorsal root ganglia. May function as a facilitator or regulator of transcriptional activation by MYC. Acts in concert with HUWE1 to regulate the circadian clock gene expression by promoting the lithium-induced ubiquination and degradation of NR1D1. The protein is E3 ubiquitin-protein ligase MYCBP2 of Homo sapiens (Human).